The following is a 470-amino-acid chain: Glycine--tRNA ligase (470 aa).

2 residues coordinate substrate: Arg94 and Glu183. ATP-binding positions include 215 to 217, 225 to 230, 298 to 299, and 342 to 345; these read RNE, FRMVEF, EI, and GCDR. Residue 230–234 participates in substrate binding; the sequence is FEQME. Substrate is bound at residue 338 to 342; sequence ETSSG.

The protein belongs to the class-II aminoacyl-tRNA synthetase family. Homodimer.

It is found in the cytoplasm. The catalysed reaction is tRNA(Gly) + glycine + ATP = glycyl-tRNA(Gly) + AMP + diphosphate. Functionally, catalyzes the attachment of glycine to tRNA(Gly). The sequence is that of Glycine--tRNA ligase from Chlorobaculum tepidum (strain ATCC 49652 / DSM 12025 / NBRC 103806 / TLS) (Chlorobium tepidum).